Here is a 509-residue protein sequence, read N- to C-terminus: MTETLRLTPAGLTLADLRRVLAGPVRLEIAPRDLEAAEASARTVAEVIGSGRTVYGINTGFGLLARTRIEPDRLAQLQRNLVLSHAAGTGEAMPDRVVRLMLVLKVASLLRGFSGVRGEVIRALAALVSAEALPLVPAKGSVGASGDLAPLAHLVLPLLGLGQVRLAGRTVPAADGLAAAGLRPLELGPKEGLALLNGTQASTALALAGLVAAEWAFDAALVAGALSIDAAQGSDTPFDARIHALRGQRGQIDAAAGYRRLLAGSPIRASHLSCARVQDPYCLRCQPQVMGACLDQLRFAAGTLATEANAVTDNPLVFPDDGDILSGGNFHAEPVAMAADQIALALAEIGSLSERRTAMLVDPHHNGGLPAFLVTDGGLNSGFMIAQVTAAALASENKGLAHPASVDSIPTSANQEDHVSMATWAARRLLEMADNAAGIVAVELLAACQGIDFRRPLRTSAPLEAVHAAVREEVGFYDRDRHFAPDIEAARGLIAAGRAASGTDWLAAA.

The segment at residues 144–146 is a cross-link (5-imidazolinone (Ala-Gly)); sequence ASG. The residue at position 145 (Ser145) is a 2,3-didehydroalanine (Ser).

It belongs to the PAL/histidase family. Contains an active site 4-methylidene-imidazol-5-one (MIO), which is formed autocatalytically by cyclization and dehydration of residues Ala-Ser-Gly.

Its subcellular location is the cytoplasm. It carries out the reaction L-histidine = trans-urocanate + NH4(+). The protein operates within amino-acid degradation; L-histidine degradation into L-glutamate; N-formimidoyl-L-glutamate from L-histidine: step 1/3. The protein is Histidine ammonia-lyase of Rhodospirillum centenum (strain ATCC 51521 / SW).